The primary structure comprises 181 residues: 6,7-dimethyl-8-ribityllumazine synthase (181 aa).

Residues Tyr-30, 61–63 (ALE), and 87–89 (CII) contribute to the 5-amino-6-(D-ribitylamino)uracil site. 92–93 (ET) is a (2S)-2-hydroxy-3-oxobutyl phosphate binding site. Catalysis depends on His-95, which acts as the Proton donor. Asn-120 serves as a coordination point for 5-amino-6-(D-ribitylamino)uracil. Residue Arg-134 participates in (2S)-2-hydroxy-3-oxobutyl phosphate binding.

The protein belongs to the DMRL synthase family.

It catalyses the reaction (2S)-2-hydroxy-3-oxobutyl phosphate + 5-amino-6-(D-ribitylamino)uracil = 6,7-dimethyl-8-(1-D-ribityl)lumazine + phosphate + 2 H2O + H(+). Its pathway is cofactor biosynthesis; riboflavin biosynthesis; riboflavin from 2-hydroxy-3-oxobutyl phosphate and 5-amino-6-(D-ribitylamino)uracil: step 1/2. Catalyzes the formation of 6,7-dimethyl-8-ribityllumazine by condensation of 5-amino-6-(D-ribitylamino)uracil with 3,4-dihydroxy-2-butanone 4-phosphate. This is the penultimate step in the biosynthesis of riboflavin. The protein is 6,7-dimethyl-8-ribityllumazine synthase of Beijerinckia indica subsp. indica (strain ATCC 9039 / DSM 1715 / NCIMB 8712).